A 302-amino-acid chain; its full sequence is MDPKRLTHLKQLEAESIHILREVAAEFDNPVMMYSIGKDSSVMLHLARKAFYPGKIPFPLLHVDTDWKFREMIEFRDRTAEKYGFELLVHKNPEGMAMGISPFEHGSSKHTDVMKTQGLKQALNKYGFDAAFGGARRDEEKSRAKERIYSFRDKNHSWDPKNQRPELWKTYNGQINKGESIRVFPLSNWTELDIWQYIYLESIEIVPLYLSDIRPVVERDGMLIMADDDRLKLQPGEKIEYKSVRFRTLGCYPLTGAIESKADTLPGIIEEMLVATSSERQGRAIDHDQSGSMELKKRQGYF.

The tract at residues 279–302 (ERQGRAIDHDQSGSMELKKRQGYF) is disordered. Positions 280–302 (RQGRAIDHDQSGSMELKKRQGYF) are enriched in basic and acidic residues.

The protein belongs to the PAPS reductase family. CysD subfamily. As to quaternary structure, heterodimer composed of CysD, the smaller subunit, and CysN.

It catalyses the reaction sulfate + ATP + H(+) = adenosine 5'-phosphosulfate + diphosphate. Its pathway is sulfur metabolism; hydrogen sulfide biosynthesis; sulfite from sulfate: step 1/3. With CysN forms the ATP sulfurylase (ATPS) that catalyzes the adenylation of sulfate producing adenosine 5'-phosphosulfate (APS) and diphosphate, the first enzymatic step in sulfur assimilation pathway. APS synthesis involves the formation of a high-energy phosphoric-sulfuric acid anhydride bond driven by GTP hydrolysis by CysN coupled to ATP hydrolysis by CysD. The sequence is that of Sulfate adenylyltransferase subunit 2 from Photobacterium profundum (strain SS9).